Reading from the N-terminus, the 421-residue chain is Histone-lysine N-methyltransferase SUV39H1 (421 aa).

The Chromo domain occupies 46–104; that stretch reads FEVEYLWNYKKVQDQELYLVKWKYYPDSESTWEPRHHLKCNNLLKQFHLDLERELLRRA. The 61-residue stretch at 189–249 folds into the Pre-SET domain; sequence AGCKCRDCFS…SCPNRVVQKG (61 aa). Zn(2+) contacts are provided by cysteine 191, cysteine 193, cysteine 196, cysteine 203, cysteine 204, cysteine 231, cysteine 235, cysteine 237, and cysteine 241. Positions 252-375 constitute an SET domain; the sequence is YKFCIFRTSD…TGEELTFDYN (124 aa). S-adenosyl-L-methionine is bound by residues 263–265, tyrosine 306, and 332–333; these read RGW and NH. Positions 335, 409, 411, and 416 each coordinate Zn(2+). The 17-residue stretch at 405 to 421 folds into the Post-SET domain; the sequence is VRVECKCGVSSCRKYLF.

Belongs to the class V-like SAM-binding methyltransferase superfamily. Histone-lysine methyltransferase family. Suvar3-9 subfamily.

Its subcellular location is the nucleus. The protein resides in the chromosome. It is found in the centromere. It carries out the reaction L-lysyl(9)-[histone H3] + 3 S-adenosyl-L-methionine = N(6),N(6),N(6)-trimethyl-L-lysyl(9)-[histone H3] + 3 S-adenosyl-L-homocysteine + 3 H(+). Histone methyltransferase that specifically trimethylates 'Lys-9' of histone H3 using monomethylated H3 'Lys-9' as substrate. H3 'Lys-9' trimethylation represents a specific tag for epigenetic transcriptional repression by recruiting HP1 (CBX1, CBX3 and/or CBX5) proteins to methylated histones. Mainly functions in heterochromatin regions, thereby playing a central role in the establishment of constitutive heterochromatin at pericentric and telomere regions. H3 'Lys-9' trimethylation is also required to direct DNA methylation at pericentric repeats. SUV39H1 is targeted to histone H3 via its interaction with RB1 and is involved in many processes. The chain is Histone-lysine N-methyltransferase SUV39H1 (suv39h1) from Xenopus laevis (African clawed frog).